The following is a 267-amino-acid chain: Small ribosomal subunit protein uS2c (267 aa).

Positions 237–267 are disordered; the sequence is KQKIKKTGVKISGNRRTSSITKKRNPASSKI. The segment covering 250–267 has biased composition (polar residues); it reads NRRTSSITKKRNPASSKI.

It belongs to the universal ribosomal protein uS2 family.

It localises to the plastid. Its subcellular location is the chloroplast. The sequence is that of Small ribosomal subunit protein uS2c (rps2) from Chlorella vulgaris (Green alga).